Reading from the N-terminus, the 903-residue chain is HTH-type transcriptional regulator MalT (903 aa).

39-46 (CPAGYGKT) contacts ATP. The HTH luxR-type domain occupies 832–897 (ELIRTSPLTQ…EAVQQAQRLL (66 aa)). The H-T-H motif DNA-binding region spans 856–875 (NDQIANELDVAATTIKTHIR).

The protein belongs to the MalT family. Monomer in solution. Oligomerizes to an active state in the presence of the positive effectors ATP and maltotriose.

Activated by ATP and maltotriose, which are both required for DNA binding. Positively regulates the transcription of the maltose regulon whose gene products are responsible for uptake and catabolism of malto-oligosaccharides. Specifically binds to the promoter region of its target genes, recognizing a short DNA motif called the MalT box. The chain is HTH-type transcriptional regulator MalT from Yersinia pseudotuberculosis serotype O:1b (strain IP 31758).